An 80-amino-acid polypeptide reads, in one-letter code: Acyl carrier protein (80 aa).

The region spanning Lys2–Asn77 is the Carrier domain. Ser37 is modified (O-(pantetheine 4'-phosphoryl)serine).

This sequence belongs to the acyl carrier protein (ACP) family. 4'-phosphopantetheine is transferred from CoA to a specific serine of apo-ACP by AcpS. This modification is essential for activity because fatty acids are bound in thioester linkage to the sulfhydryl of the prosthetic group.

The protein localises to the cytoplasm. It functions in the pathway lipid metabolism; fatty acid biosynthesis. In terms of biological role, carrier of the growing fatty acid chain in fatty acid biosynthesis. The chain is Acyl carrier protein from Buchnera aphidicola subsp. Acyrthosiphon pisum (strain APS) (Acyrthosiphon pisum symbiotic bacterium).